The sequence spans 79 residues: MSTIEERVKKIVVEQLGVKEEEVTTSASFVDDLGADSLDTVELVMALEEEFECEIPDEEAEKITSVQQAIDYVKSHVKS.

A Carrier domain is found at 2–77 (STIEERVKKI…QAIDYVKSHV (76 aa)). Position 37 is an O-(pantetheine 4'-phosphoryl)serine (S37).

It belongs to the acyl carrier protein (ACP) family. 4'-phosphopantetheine is transferred from CoA to a specific serine of apo-ACP by AcpS. This modification is essential for activity because fatty acids are bound in thioester linkage to the sulfhydryl of the prosthetic group.

It is found in the cytoplasm. The protein operates within lipid metabolism; fatty acid biosynthesis. Carrier of the growing fatty acid chain in fatty acid biosynthesis. The protein is Acyl carrier protein of Xanthomonas oryzae pv. oryzae (strain MAFF 311018).